We begin with the raw amino-acid sequence, 45 residues long: Cytochrome c6 (45 aa).

Residues C12, C15, and H16 each coordinate heme c.

It belongs to the cytochrome c family. PetJ subfamily. Monomer. In terms of processing, binds 1 heme c group covalently per subunit.

Its subcellular location is the cellular thylakoid lumen. In terms of biological role, functions as an electron carrier between membrane-bound cytochrome b6-f and photosystem I in oxygenic photosynthesis. This Prochlorothrix hollandica protein is Cytochrome c6 (petJ).